The primary structure comprises 445 residues: Arabinooligosaccharide-binding protein (445 aa).

Positions 1–20 are cleaved as a signal peptide; the sequence is MGKNILFFSFVGVMVLVLVA. The N-palmitoyl cysteine moiety is linked to residue Cys21. Residue Cys21 is the site of S-diacylglycerol cysteine attachment.

This sequence belongs to the bacterial solute-binding protein 1 family. The complex is composed of two ATP-binding proteins (MsmX), two transmembrane proteins (AraP and AraQ) and a solute-binding protein (AraN).

The protein resides in the cell membrane. Its function is as follows. Part of the ABC transporter complex AraNPQ involved in the uptake of arabinooligosaccharides. AraN captures the substrate and delivers it to the two transmembrane components. The protein is Arabinooligosaccharide-binding protein (araN) of Halalkalibacterium halodurans (strain ATCC BAA-125 / DSM 18197 / FERM 7344 / JCM 9153 / C-125) (Bacillus halodurans).